Here is a 129-residue protein sequence, read N- to C-terminus: Small ribosomal subunit protein uS8 (129 aa).

Belongs to the universal ribosomal protein uS8 family. In terms of assembly, part of the 30S ribosomal subunit.

Its function is as follows. One of the primary rRNA binding proteins, it binds directly to 16S rRNA central domain where it helps coordinate assembly of the platform of the 30S subunit. The protein is Small ribosomal subunit protein uS8 of Thermoplasma acidophilum (strain ATCC 25905 / DSM 1728 / JCM 9062 / NBRC 15155 / AMRC-C165).